The primary structure comprises 835 residues: Pre-mRNA-splicing factor SYF1 (835 aa).

10 HAT repeats span residues 7–38 (YILDDSDIAFEYELQKSPSVEVWQRYIAHWEA), 46–77 (RSARHILWLYERMVTQFPTLTVWEQYIGWFRR), 313–348 (ADFDKMEKVLTKALSETVKTNEFIAIYTYHVNFEQA), 414–456 (EDFD…VYWS), 458–494 (KSYEEARTIYESATKVPFPDLQDLEIVWHTWAVNEFQ), 517–551 (SIIDRFKSENRRLPSQTILFTSKRLWNYYIDLLES), 589–623 (NNLHGSLQVYEKGINMFPPEICYELWTLLLDEVME), 628–664 (ATKERIRELFEQCLQQLGNTDININSIYVKYSDFEIH), 707–741 (LGPDSLRQLLSECIQELPNSKAITYVLKFTKLEMS), and 743–777 (SDYTRARELLQYGAQLLPPIKNEELWGLWEQFELE).

The protein belongs to the crooked-neck family. Associated with the spliceosome.

It localises to the nucleus. Its function is as follows. Involved in pre-mRNA splicing and cell cycle progression. This Candida glabrata (strain ATCC 2001 / BCRC 20586 / JCM 3761 / NBRC 0622 / NRRL Y-65 / CBS 138) (Yeast) protein is Pre-mRNA-splicing factor SYF1 (SYF1).